Here is a 483-residue protein sequence, read N- to C-terminus: Cobyric acid synthase (483 aa).

Positions 248–434 constitute a GATase cobBQ-type domain; it reads ALRVVVPVLP…LHGLFEQPSA (187 aa). C329 functions as the Nucleophile in the catalytic mechanism. The active site involves H426.

It belongs to the CobB/CobQ family. CobQ subfamily.

The protein operates within cofactor biosynthesis; adenosylcobalamin biosynthesis. In terms of biological role, catalyzes amidations at positions B, D, E, and G on adenosylcobyrinic A,C-diamide. NH(2) groups are provided by glutamine, and one molecule of ATP is hydrogenolyzed for each amidation. This chain is Cobyric acid synthase, found in Ectopseudomonas mendocina (strain ymp) (Pseudomonas mendocina).